The sequence spans 338 residues: Ferredoxin--NADP reductase (338 aa).

The FAD site is built by Asp-38, Gln-46, Tyr-51, Val-91, Phe-125, Asp-291, and Thr-331.

Belongs to the ferredoxin--NADP reductase type 2 family. In terms of assembly, homodimer. Requires FAD as cofactor.

The catalysed reaction is 2 reduced [2Fe-2S]-[ferredoxin] + NADP(+) + H(+) = 2 oxidized [2Fe-2S]-[ferredoxin] + NADPH. The polypeptide is Ferredoxin--NADP reductase (Orientia tsutsugamushi (strain Boryong) (Rickettsia tsutsugamushi)).